We begin with the raw amino-acid sequence, 1221 residues long: MLYKFETKASRVKGLSFHPTRPWILASLHSGSIHLYDYRIKTLLEKFDEHEGPVRGINFHMTQPLFVSGGDDYKIKVWNYKQRRCLFTLKGHKDYIRSVEFHREAPWIVSSSDDMVIRIWNWQSRTCIAELNGHNHYVMSALFHPKDDLVVSASLDQTIRIWDISGLKKKMTTVKPYRENDPMRLQDELFGTDISVRLSLEGHDRGVNWASFHPTQPYIVSASDDHQVKLWRMNDPIVDTFRGHYNNVSCALFHPRQDLIISNSEDKTIRVWDIIKKSTVHMIRRDHDRFWTLASHPNQNLFAAGHDSGMIVFKLERERPLFVQNGDSGVFFLKKKNFNSFDFQAGRTVSLFHISKLPSNNGTQTMSYNQTERAILVSSDAEGGSYHLYKIPPKDSNTVNTKKGTGVAAIFVGRDRFAVLDKGNNVVIRDLENEEIKRCQIPFTIDWIYPSGSPGTILIQSEDKIHMFDIQQKKMLCEIQVHGVRYVIWSKDRNYVAFLTRDFIVLANKKLEQICMIHETVLPKSGVWDDNGVFIYSTSNHLKYLLQNGDNGTIRTLESTIYITGVKNNKVFAIDREFKNRIIEIDTTEYVLKLSLLQQNYNQVMTILRENRLVGKAIIAYLQKKGYPDVVHFVKDDRTRFNLALDAGNIDIALSSAKILDDKDCWNRLGVEALKQGNYQVVEMAYSRTSEFDRLSFLYLLVGNLSTLKKMISYESSDIMSRFHFSLYLGDVEERIKILQEAGLHQLAYITASIHGLTEKAESIGNLITSDGKSQLPQLPKQSYLLVPPSPINCNPNELNWPLLTTTKSVSDVMGENRFGVEQSTSTPTGDWESDEDIFSEGKSQQQSSQQQQQQQQKGDWEEDILIGDGNNGGGDDGGWERDDLKGLEKIGTDGFNNKQNDHVALFVPPQPGPSFSMIWARNSQFAVDHIAAGSFESAMNILNSQIGAVNFDPIKSMFMNIFMATRSSLGCNASTPSLLMPIQRKSAAPYITYGLGHLIERLKTNAYKSTTEGKFNDALSHFTYILHTIIFCSVDNKQEVNELKDLINICREYILGIKIELQRKELSIGAQKDSTLGRQAELAAYFTHCNLDPSHLILSLRSAMNCAYKVKHFNLAASFARRLISLNPNPDLATQAKKVFNFAQQTPTPSDIQQLNYDERNPFVICAHSYVPIYKGSPLIKCPYCSSCYLPTHKGKVCSVCQISEIGKDVQGLQVITIQK.

9 WD repeats span residues 7–46 (TKAS…LLEK), 49–88 (EHEG…CLFT), 91–130 (GHKD…CIAE), 133–172 (GHNH…KKMT), 202–241 (GHDR…VDTF), 243–282 (GHYN…TVHM), 285–323 (RDHD…PLFV), 358–399 (PSNN…SNTV), and 528–567 (WDDN…TGVK). The segment at 820 to 885 (GVEQSTSTPT…DDGGWERDDL (66 aa)) is disordered. Low complexity predominate over residues 844–857 (SQQQSSQQQQQQQQ). A WD 10 repeat occupies 910-953 (PQPGPSFSMIWARNSQFAVDHIAAGSFESAMNILNSQIGAVNFD).

Oligomeric complex that consists of at least the alpha, beta, beta', gamma, delta, epsilon and zeta subunits.

It is found in the cytoplasm. The protein localises to the golgi apparatus membrane. The coatomer is a cytosolic protein complex that binds to dilysine motifs and reversibly associates with Golgi non-clathrin-coated vesicles, which further mediate biosynthetic protein transport from the ER, via the Golgi up to the trans Golgi network. Coatomer complex is required for budding from Golgi membranes, and is essential for the retrograde Golgi-to-ER transport of dilysine-tagged proteins. This is Coatomer subunit alpha (copa) from Dictyostelium discoideum (Social amoeba).